We begin with the raw amino-acid sequence, 1149 residues long: Potassium channel subfamily U member 1 (1149 aa).

The Extracellular portion of the chain corresponds to 1–24 (MFQTKLRNESWEDLQKMSCTTEIQ). A helical transmembrane segment spans residues 25–45 (VAFILSSFMTFISGLIILLIF). At 46 to 101 (RLIWRTVKKWQIIKGTGIILELFTSGSIRRNHVRSLHFHGRFRDRIEMLLSAQTFV) the chain is on the cytoplasmic side. A helical transmembrane segment spans residues 102–122 (GQVLVILVFVLSIGSLIIYFI). Residues 123–138 (NSADPVGSCSSYEDKT) are Extracellular-facing. The helical transmembrane segment at 139-159 (IPVDLVFNAFFSFYFGLRFMA) threads the bilayer. The Cytoplasmic segment spans residues 160 to 163 (ADDK). A helical membrane pass occupies residues 164-184 (IKFWLEMNSIVDIFTIPPTFI). Residues 185–188 (SYYL) lie on the Extracellular side of the membrane. The chain crosses the membrane as a helical; Voltage-sensor span at residues 189-209 (KSNWLGLRFLRALRLLELPRI). Residues 210–226 (LQILRAIKTSNSVKFSK) are Cytoplasmic-facing. A helical membrane pass occupies residues 227–247 (LLSIVLSTWFTAAGFIHLVEN). At 248–259 (SGDPWLKGRNSQ) the chain is on the extracellular side. Residues 260 to 282 (NISYFDSVYLVMATTSTVGFGDV) constitute an intramembrane region (pore-forming). The short motif at 276–279 (TVGF) is the Selectivity for potassium element. At 283-291 (VAKTSLGRT) the chain is on the extracellular side. The chain crosses the membrane as a helical span at residues 292 to 312 (FIIFFTLGSLILFANYIPEMV). Residues 313–1149 (ELFANKRKYT…EDPFAYSEPL (837 aa)) lie on the Cytoplasmic side of the membrane. RCK N-terminal domains follow at residues 331–473 (KKFI…DNII) and 713–884 (RNHI…EGSL). The segment covering 829–845 (IDSSSDSSPSVSEETAS) has biased composition (low complexity). Disordered regions lie at residues 829–851 (IDSS…NGHN) and 1106–1149 (ARNQ…SEPL). Polar residues predominate over residues 1106–1120 (ARNQIRTNSSITSQK).

It belongs to the potassium channel family. Calcium-activated (TC 1.A.1.3) subfamily. KCa5.1/KCNU1 sub-subfamily. As to quaternary structure, homotetramer; which constitutes the calcium-activated potassium channel. Interacts with LRRC52; this interaction changes some channel gating properties, such as shifting gating to more negative potentials at a given pH. As to expression, testis-specific.

It localises to the cell membrane. The protein localises to the cell projection. It is found in the cilium. The protein resides in the flagellum membrane. The catalysed reaction is K(+)(in) = K(+)(out). Regulated by changes in cytosolic pH; activated by alkalization. VU0546110 acts as a selective inhibitor. The auxiliary subunit LRRC52 shifts the activation of KCNU1 to more negative potentials at a given pH. Testis-specific potassium channel activated by both intracellular pH and membrane voltage that mediates export of K(+). Represents the primary spermatozoan K(+) current. The channel underlies a pH-triggered membrane hyperpolarization during the process of sperm capacitation, as sperm encounter the alkaline environment near the ovum in the female reproductive tract, thereby playing an essential for male fertility. The sequence is that of Potassium channel subfamily U member 1 (KCNU1) from Macaca fascicularis (Crab-eating macaque).